Consider the following 689-residue polypeptide: DNA ligase (689 aa).

NAD(+) is bound by residues 58-62 (DQEYD), 107-108 (SL), and Glu138. Catalysis depends on Lys140, which acts as the N6-AMP-lysine intermediate. 4 residues coordinate NAD(+): Arg161, Glu198, Lys314, and Lys338. Residues Cys432, Cys435, Cys448, and Cys453 each contribute to the Zn(2+) site. The BRCT domain maps to 611 to 689 (ASSGTLSGKT…QELLEMLHGG (79 aa)).

This sequence belongs to the NAD-dependent DNA ligase family. LigA subfamily. The cofactor is Mg(2+). Requires Mn(2+) as cofactor.

It carries out the reaction NAD(+) + (deoxyribonucleotide)n-3'-hydroxyl + 5'-phospho-(deoxyribonucleotide)m = (deoxyribonucleotide)n+m + AMP + beta-nicotinamide D-nucleotide.. DNA ligase that catalyzes the formation of phosphodiester linkages between 5'-phosphoryl and 3'-hydroxyl groups in double-stranded DNA using NAD as a coenzyme and as the energy source for the reaction. It is essential for DNA replication and repair of damaged DNA. This is DNA ligase from Methylacidiphilum infernorum (isolate V4) (Methylokorus infernorum (strain V4)).